Consider the following 302-residue polypeptide: Recombination-associated protein RdgC (302 aa).

The protein belongs to the RdgC family.

The protein localises to the cytoplasm. Its subcellular location is the nucleoid. Functionally, may be involved in recombination. The sequence is that of Recombination-associated protein RdgC from Xylella fastidiosa (strain M12).